A 333-amino-acid polypeptide reads, in one-letter code: Arginase (333 aa).

Met-1 carries the N-acetylmethionine modification. Ser-16 is subject to Phosphoserine. Position 77 is a phosphothreonine (Thr-77). Mn(2+)-binding residues include His-123, Asp-146, His-148, and Asp-150. Residues 148–152, 159–161, and Asp-205 each bind substrate; these read HADIN and SGN. Mn(2+) is bound by residues Asp-256 and Asp-258. Thr-270 carries the post-translational modification Phosphothreonine. Positions 270 and 301 each coordinate substrate.

Belongs to the arginase family. As to quaternary structure, homotrimer. The cofactor is Mn(2+).

The catalysed reaction is L-arginine + H2O = urea + L-ornithine. The protein operates within nitrogen metabolism; urea cycle; L-ornithine and urea from L-arginine: step 1/1. The polypeptide is Arginase (CAR1) (Saccharomyces cerevisiae (strain ATCC 204508 / S288c) (Baker's yeast)).